Consider the following 336-residue polypeptide: D-alanine--D-alanine ligase (336 aa).

Residues 124–330 (KMWFSALGIP…FTQYLSLVIN (207 aa)) enclose the ATP-grasp domain. 154–209 (ALEKWGSIFVKAASQGSSVGCYKVDEASKVLGVLKDAFGYAPYVIVEKTIKARELE) serves as a coordination point for ATP. The Mg(2+) site is built by Asp-284, Glu-297, and Asn-299.

It belongs to the D-alanine--D-alanine ligase family. Mg(2+) serves as cofactor. Mn(2+) is required as a cofactor.

It localises to the cytoplasm. It catalyses the reaction 2 D-alanine + ATP = D-alanyl-D-alanine + ADP + phosphate + H(+). It participates in cell wall biogenesis; peptidoglycan biosynthesis. In terms of biological role, cell wall formation. The chain is D-alanine--D-alanine ligase from Shewanella oneidensis (strain ATCC 700550 / JCM 31522 / CIP 106686 / LMG 19005 / NCIMB 14063 / MR-1).